We begin with the raw amino-acid sequence, 33 residues long: Gastrin (33 aa).

Residue Q1 is modified to Pyrrolidone carboxylic acid. F33 is subject to Phenylalanine amide.

This sequence belongs to the gastrin/cholecystokinin family.

It is found in the secreted. In terms of biological role, gastrin stimulates the stomach mucosa to produce and secrete hydrochloric acid and the pancreas to secrete its digestive enzymes. It also stimulates smooth muscle contraction and increases blood circulation and water secretion in the stomach and intestine. The sequence is that of Gastrin (GAST) from Cavia porcellus (Guinea pig).